The chain runs to 126 residues: Histone H2B (126 aa).

Residues 1–12 (MPEPAKSAPAPK) are compositionally biased toward low complexity. Positions 1–36 (MPEPAKSAPAPKKGSKKAVTKTQKKGDKKRKKSRKE) are disordered. N6-acetyllysine occurs at positions 6 and 13. The segment covering 13–34 (KGSKKAVTKTQKKGDKKRKKSR) has biased composition (basic residues). Ser-15 is subject to Phosphoserine. N6-acetyllysine is present on residues Lys-16 and Lys-21. Residue Lys-121 forms a Glycyl lysine isopeptide (Lys-Gly) (interchain with G-Cter in ubiquitin) linkage.

It belongs to the histone H2B family. The nucleosome is a histone octamer containing two molecules each of H2A, H2B, H3 and H4 assembled in one H3-H4 heterotetramer and two H2A-H2B heterodimers. The octamer wraps approximately 147 bp of DNA. Post-translationally, monoubiquitination of Lys-121 by the RNF20/40 complex gives a specific tag for epigenetic transcriptional activation and is also prerequisite for histone H3 'Lys-4' and 'Lys-79' methylation. In terms of processing, phosphorylated on Ser-15 during apoptosis; which facilitates apoptotic chromatin condensation.

It is found in the nucleus. Its subcellular location is the chromosome. In terms of biological role, core component of nucleosome. Nucleosomes wrap and compact DNA into chromatin, limiting DNA accessibility to the cellular machineries which require DNA as a template. Histones thereby play a central role in transcription regulation, DNA repair, DNA replication and chromosomal stability. DNA accessibility is regulated via a complex set of post-translational modifications of histones, also called histone code, and nucleosome remodeling. This chain is Histone H2B, found in Cairina moschata (Muscovy duck).